The chain runs to 57 residues: Myrmicitoxin(1)-Pm7a (57 aa).

A signal peptide spans M1–A23. Residues E24–A31 constitute a propeptide that is removed on maturation.

The protein belongs to the formicidae venom clade 4 family. In terms of tissue distribution, expressed by the venom gland.

The protein localises to the secreted. Probable neurotoxin. This Pogonomyrmex maricopa (Maricopa harvester ant) protein is Myrmicitoxin(1)-Pm7a.